Consider the following 300-residue polypeptide: Fatty acid hydroxylase uhd1 (300 aa).

NADP(+) is bound by residues 14–20 (GANGFVG), arginine 39, 63–64 (DL), 83–85 (VAS), tyrosine 156, lysine 160, 183–186 (PVYI), and serine 199. Lysine 160 serves as the catalytic Proton donor.

Belongs to the NAD(P)-dependent epimerase/dehydratase family. Dihydroflavonol-4-reductase subfamily.

It participates in secondary metabolite biosynthesis. In terms of biological role, fatty acid hydroxylase; part of the gene cluster that mediates the biosynthesis of the glycolipid biosurfactant ustilagic acid (UA). UA is a secreted cellobiose glycolipid that is toxic for many microorganisms and confers biocontrol activity to U.maydis. UA consists of 15,16-dihydroxypalmitic or 2,15,16-trihydroxypalmitic acid, which is O-glycosidically linked to cellobiose at its terminal hydroxyl group. In addition, the cellobiose moiety is acetylated and acylated with a short-chain hydroxy fatty acid. UA biosynthesis starts with omega-hydroxylation of palmitic acid catalyzed by the cytochrome P450 monooxygenase cyp1. Terminal hydroxylation of palmitic acid precedes subterminal hydroxylation catalyzed by the cytochrome P450 monooxygenase cyp2. Sequential glucosylation of the hydroxy fatty acid is probably catalyzed by the glycosyltransferase ugt1. The cellobiose lipid is further decorated by acetylation of the proximal glucose residue and by acylation with a short-chain beta-hydroxy fatty acid at the distal glucose residue. The acyltransferase uat1 may be a good candidate for catalyzing either acetylation or acylation of the cellobiose lipid. The fatty acid synthase fas2 may be involved in synthesis of the carbon backbone of the short-chain beta-hydroxy fatty acid esterified to the cellobiose disaccharide. The secreted UA consists of a mixture of both alpha-hydroxylated and non-hydroxylated glycolipids; therefore, alpha-hydroxylation of the long-chain fatty, catalyzed by the fatty acid hydroxylase ahd1, occurs late in UA biosynthesis and may be the last step before secretion. The sequence is that of Fatty acid hydroxylase uhd1 from Mycosarcoma maydis (Corn smut fungus).